A 651-amino-acid polypeptide reads, in one-letter code: Polyadenylate-binding protein 1 (651 aa).

The span at 1 to 27 shows a compositional bias: low complexity; the sequence is MSSTESPVPAAAAPAEAVPASTPAPAA. The segment at 1-42 is disordered; that stretch reads MSSTESPVPAAAAPAEAVPASTPAPAAEQPAVGNGEQRNNAD. 4 RRM domains span residues 47 to 125, 135 to 211, 227 to 304, and 330 to 407; these read TSLY…WSQR, GNIF…HHIP, TNVY…RAQK, and VNLY…LAQR. Disordered regions lie at residues 481-554 and 632-651; these read QPGQ…EADQ and QNDSAGAEAEANAEAPKTEA. A compositionally biased stretch (pro residues) spans 529-540; that stretch reads AGQPVPGQPMPR. A PABC domain is found at 555 to 632; the sequence is PGALTAAALA…ALEVLKEYQQ (78 aa). Low complexity predominate over residues 636-651; the sequence is AGAEAEANAEAPKTEA.

It belongs to the polyadenylate-binding protein type-1 family. Part of large ribonucleoprotein complexes (mRNPs) containing RNA-binding proteins RRM4 and PAB1, endosome-binding protein UPA1, core scaffold protein UPA2 and associated factor GRP1. Interacts (via PABC domain) with UPA1 (via PAM2 domain). Interacts (via PABC domain) with UPA2 (via PAM2 domains).

It is found in the cytoplasm. The protein localises to the cytoskeleton. The protein resides in the endosome. Functionally, RNA-binding protein involved in the formation of polar-growing hyphae which is essential for infection by the plant pathogen. Component of endosomal mRNA transport that regulates polarity of the infectious hyphae by transporting a broad spectrum of cargo mRNAs from the nucleus to cell poles. This chain is Polyadenylate-binding protein 1, found in Mycosarcoma maydis (Corn smut fungus).